The following is a 2207-amino-acid chain: DNA polymerase epsilon catalytic subunit A (2207 aa).

Disordered stretches follow at residues 1-20, 1201-1233, and 1934-1961; these read MPSRKPSKYGNKFRSGAASF, SMEKLKSSSPQKASGKRKHPENQTKTSLDPFAS, and RPESDDSSTPRLTQIPIGQPEPGQENEE. Zn(2+)-binding residues include Cys2075, Cys2078, Cys2113, and Cys2116. The CysA-type zinc finger occupies 2075–2116; the sequence is CSACCLIRDLDLCRDEDVLPERGSGSGPDSATSSRPWCCPFC. Positions 2147, 2150, 2162, and 2164 each coordinate [4Fe-4S] cluster. The short motif at 2147–2164 is the CysB motif element; it reads CSKCGTLKISEFMEHCSC.

This sequence belongs to the DNA polymerase type-B family. In terms of assembly, heterotetramer. Consists of 4 subunits: pol2, dpb2, dpb3 and dpb4. The cofactor is [4Fe-4S] cluster.

Its subcellular location is the nucleus. The catalysed reaction is DNA(n) + a 2'-deoxyribonucleoside 5'-triphosphate = DNA(n+1) + diphosphate. Functionally, DNA polymerase II participates in chromosomal DNA replication. This is DNA polymerase epsilon catalytic subunit A (pol2) from Emericella nidulans (strain FGSC A4 / ATCC 38163 / CBS 112.46 / NRRL 194 / M139) (Aspergillus nidulans).